The following is a 278-amino-acid chain: Sulfur carrier protein FdhD (278 aa).

Cys121 serves as the catalytic Cysteine persulfide intermediate. 260–265 (FCKPGR) lines the Mo-bis(molybdopterin guanine dinucleotide) pocket.

This sequence belongs to the FdhD family.

It is found in the cytoplasm. Functionally, required for formate dehydrogenase (FDH) activity. Acts as a sulfur carrier protein that transfers sulfur from IscS to the molybdenum cofactor prior to its insertion into FDH. The chain is Sulfur carrier protein FdhD from Salmonella schwarzengrund (strain CVM19633).